The primary structure comprises 305 residues: N-acetylmuramic acid 6-phosphate etherase (305 aa).

One can recognise an SIS domain in the interval 54 to 217 (AVPQLERGGR…SSALMVRLGK (164 aa)). The active-site Proton donor is the Glu82. The active site involves Glu113.

This sequence belongs to the GCKR-like family. MurNAc-6-P etherase subfamily. Homodimer.

It catalyses the reaction N-acetyl-D-muramate 6-phosphate + H2O = N-acetyl-D-glucosamine 6-phosphate + (R)-lactate. It functions in the pathway amino-sugar metabolism; N-acetylmuramate degradation. Its function is as follows. Specifically catalyzes the cleavage of the D-lactyl ether substituent of MurNAc 6-phosphate, producing GlcNAc 6-phosphate and D-lactate. The protein is N-acetylmuramic acid 6-phosphate etherase of Deinococcus radiodurans (strain ATCC 13939 / DSM 20539 / JCM 16871 / CCUG 27074 / LMG 4051 / NBRC 15346 / NCIMB 9279 / VKM B-1422 / R1).